A 121-amino-acid chain; its full sequence is Ribonuclease P protein component (121 aa).

The protein belongs to the RnpA family. In terms of assembly, consists of a catalytic RNA component (M1 or rnpB) and a protein subunit.

The catalysed reaction is Endonucleolytic cleavage of RNA, removing 5'-extranucleotides from tRNA precursor.. Functionally, RNaseP catalyzes the removal of the 5'-leader sequence from pre-tRNA to produce the mature 5'-terminus. It can also cleave other RNA substrates such as 4.5S RNA. The protein component plays an auxiliary but essential role in vivo by binding to the 5'-leader sequence and broadening the substrate specificity of the ribozyme. In Neisseria meningitidis serogroup B (strain ATCC BAA-335 / MC58), this protein is Ribonuclease P protein component.